Here is a 478-residue protein sequence, read N- to C-terminus: Cytochrome c-552 (478 aa).

The N-terminal stretch at Met1–Ala26 is a signal peptide. Residue His94 participates in heme c binding. Heme contacts are provided by Cys122, Cys125, and Lys126. Positions 160, 163, 164, 209, 212, and 213 each coordinate heme c. Residues Glu215, Tyr216, Lys261, and Gln263 each coordinate Ca(2+). Substrate is bound at residue Tyr216. A substrate-binding site is contributed by His264. The heme c site is built by His275, Cys282, Cys285, His286, His301, Cys314, Cys317, His318, and His393.

It belongs to the cytochrome c-552 family. Requires Ca(2+) as cofactor. Heme c is required as a cofactor.

It is found in the periplasm. The catalysed reaction is 6 Fe(III)-[cytochrome c] + NH4(+) + 2 H2O = 6 Fe(II)-[cytochrome c] + nitrite + 8 H(+). It functions in the pathway nitrogen metabolism; nitrate reduction (assimilation). Functionally, catalyzes the reduction of nitrite to ammonia, consuming six electrons in the process. The protein is Cytochrome c-552 of Escherichia coli (strain ATCC 8739 / DSM 1576 / NBRC 3972 / NCIMB 8545 / WDCM 00012 / Crooks).